We begin with the raw amino-acid sequence, 362 residues long: Acetylglutamate kinase (362 aa).

Residues 1–11 show a composition bias toward pro residues; sequence MNAPTRTPPPS. The interval 1-42 is disordered; the sequence is MNAPTRTPPPSNGGHGSTGSTGSTGDAAPGGGTGRGPAATAR. Substrate is bound by residues 106 to 107, Arg128, and Asn227; that span reads GG. Residues 329-362 are disordered; sequence MAESGTSPEPGTPPAPAARPAGIVPAGEPTGGTP. Positions 346–355 are enriched in low complexity; it reads ARPAGIVPAG.

It belongs to the acetylglutamate kinase family. ArgB subfamily.

The protein resides in the cytoplasm. The catalysed reaction is N-acetyl-L-glutamate + ATP = N-acetyl-L-glutamyl 5-phosphate + ADP. It functions in the pathway amino-acid biosynthesis; L-arginine biosynthesis; N(2)-acetyl-L-ornithine from L-glutamate: step 2/4. Its function is as follows. Catalyzes the ATP-dependent phosphorylation of N-acetyl-L-glutamate. The chain is Acetylglutamate kinase from Frankia casuarinae (strain DSM 45818 / CECT 9043 / HFP020203 / CcI3).